Reading from the N-terminus, the 538-residue chain is Cytochrome P450 monooxygenase flvC (538 aa).

A helical membrane pass occupies residues 17 to 37 (TVLIAGLLVYWVGSAIFLAVL). Cys-478 contacts heme.

It belongs to the cytochrome P450 family. The cofactor is heme.

It localises to the membrane. The catalysed reaction is pre-flavunoidine + reduced [NADPH--hemoprotein reductase] + O2 = 10-hydroxy-pre-flavunoidine + oxidized [NADPH--hemoprotein reductase] + H2O + H(+). It participates in secondary metabolite biosynthesis; terpenoid biosynthesis. In terms of biological role, cytochrome P450 monooxygenase; part of the gene cluster that mediates the biosynthesis of flavunoidine, an alkaloidal terpenoid with a tetracyclic cage-like core connected to dimethylcadaverine via a C-N bond and acylated with 5,5-dimethyl-L-pipecolate. The tetracyclic core is synthesized by the terpene cyclase flvE and the cytochrome P450 monooxygenase flvD. The terpene cyclase flvE catalyzes the cyclization of farnesyl pyrophosphate (FPP) to form (1R,4R,5S)-(+)-acoradiene and the cytochrome P450 monooxygenase flvD is then responsible for oxidative conversion of (1R,4R,5S)-(+)-acoradiene into the tetracyclic cage present in the final product flavunoidine. In parallel, the N-methyltransferase flvH dimethylates L-lysine to give N,N-dimethyl-L-Lysin which is decarboxylated by flvG to afford dimethylcadaverine. The terpene cyclase-like protein flvF is the enzyme that attaches the dimethylcadaverine precusor at the C-7 of the tetracyclic cage to yield pre-flavunoidine. The cytochrome monooxygenase flvC hydroxylates the C-10 position of pre-flavunoidine whereas the NRPS flvI acylates the terpenoid core at the hydroxylated C-10 with dimethylpipecolate to yield final flavunoidine. The bifunctional enzyme flvA and the dehydrogenase flvB are responsible for the synthesis of the dimethylpipecolate precursor. The PLP-dependent lyase domain of flvA might use L-O-acetyl-homoserine and alpha-keto-isovalerate to form an intermediary ketone that can cyclize intramolecularly to yield an imine. The imine can be reduced by flvB to yield the 6-carboxylated pipecolate. The C-terminal alpha-KG-dependent oxygenase domain of flvA is then proposed to catalyze the decarboxylation to yield dimethylpipecolate. The chain is Cytochrome P450 monooxygenase flvC from Aspergillus flavus (strain ATCC 200026 / FGSC A1120 / IAM 13836 / NRRL 3357 / JCM 12722 / SRRC 167).